Reading from the N-terminus, the 292-residue chain is Protease HtpX homolog (292 aa).

The next 2 helical transmembrane spans lie at 4–24 (IALF…VASL) and 38–58 (LGAL…ISLL). Residue His-144 participates in Zn(2+) binding. Residue Glu-145 is part of the active site. His-148 is a Zn(2+) binding site. 2 consecutive transmembrane segments (helical) span residues 152–172 (GDMV…VFLS) and 199–219 (ITTI…VAWF). Glu-224 contacts Zn(2+).

Belongs to the peptidase M48B family. Zn(2+) serves as cofactor.

Its subcellular location is the cell inner membrane. The chain is Protease HtpX homolog from Acidovorax ebreus (strain TPSY) (Diaphorobacter sp. (strain TPSY)).